We begin with the raw amino-acid sequence, 335 residues long: Phospho-N-acetylmuramoyl-pentapeptide-transferase (335 aa).

Transmembrane regions (helical) follow at residues 2 to 22 (PPLFCVLKAFFIGLVVSLILV), 55 to 75 (IPTAGGIIFVLSVVLSILLLL), 77 to 97 (CNLWSTWFLVGATLLWGALGW), 118 to 137 (FFIQNCLAIGTVLPIMIAYG), 153 to 173 (LPHCWLGYLFSFSIAVLAIVG), 193 to 213 (VIACLGMLIVTFAYGAPWAFI), 238 to 258 (IFMGDTGSLFLGGMLGICAVL), 263 to 283 (FMLLFMGGIFVLESLSVILQV), and 313 to 333 (VVRNFWIIEFLCVAIGIFAVF).

Belongs to the glycosyltransferase 4 family. MraY subfamily. Mg(2+) is required as a cofactor.

Its subcellular location is the cell inner membrane. It carries out the reaction UDP-N-acetyl-alpha-D-muramoyl-L-alanyl-gamma-D-glutamyl-meso-2,6-diaminopimeloyl-D-alanyl-D-alanine + di-trans,octa-cis-undecaprenyl phosphate = di-trans,octa-cis-undecaprenyl diphospho-N-acetyl-alpha-D-muramoyl-L-alanyl-D-glutamyl-meso-2,6-diaminopimeloyl-D-alanyl-D-alanine + UMP. It functions in the pathway cell wall biogenesis; peptidoglycan biosynthesis. Catalyzes the initial step of the lipid cycle reactions in the biosynthesis of the cell wall peptidoglycan: transfers peptidoglycan precursor phospho-MurNAc-pentapeptide from UDP-MurNAc-pentapeptide onto the lipid carrier undecaprenyl phosphate, yielding undecaprenyl-pyrophosphoryl-MurNAc-pentapeptide, known as lipid I. The chain is Phospho-N-acetylmuramoyl-pentapeptide-transferase from Chlamydia muridarum (strain MoPn / Nigg).